Consider the following 1019-residue polypeptide: DNA topoisomerase 1 (1019 aa).

A disordered region spans residues 1 to 160 (MNSIQVKNEP…KTMSITGSGE (160 aa)). The segment covering 46 to 56 (KPLAKRPKVED) has biased composition (basic and acidic residues). Polar residues predominate over residues 62-78 (PLTSTVSSQNGVQKRSG). 2 stretches are compositionally biased toward acidic residues: residues 83–93 (DDNDDDSDSDS) and 107–136 (SDDD…DDDD). Interaction with DNA regions lie at residues 379–380 (KY), 442–447 (RAGNEK), and 556–558 (SAK). The Topo IB-type catalytic domain occupies 386–860 (TSNFKTNSDR…KKVKKEEEEN (475 aa)). Residues 716-737 (EQKGLTGDDGTPKKGKKAKNVE) form a disordered region. Catalysis depends on Tyr822, which acts as the O-(3'-phospho-DNA)-tyrosine intermediate. 2 disordered regions span residues 843-890 (GQGK…TGDS) and 940-1019 (MRKL…AAVV). Positions 854–863 (KKEEEENDIK) are enriched in basic and acidic residues. The segment covering 864-879 (PKKKDAKGAASKKRAA) has biased composition (basic residues). 2 stretches are compositionally biased toward basic and acidic residues: residues 940-950 (MRKLDSAERKG) and 980-996 (TSAD…VDKT). Positions 997–1012 (EESDDDLSSDSSDDED) are enriched in acidic residues.

It belongs to the type IB topoisomerase family. As to quaternary structure, monomer.

It catalyses the reaction ATP-independent breakage of single-stranded DNA, followed by passage and rejoining.. Functionally, releases the supercoiling and torsional tension of DNA introduced during the DNA replication and transcription by transiently cleaving and rejoining one strand of the DNA duplex. Introduces a single-strand break via transesterification at a target site in duplex DNA. The scissile phosphodiester is attacked by the catalytic tyrosine of the enzyme, resulting in the formation of a DNA-(3'-phosphotyrosyl)-enzyme intermediate and the expulsion of a 5'-OH DNA strand. The free DNA strand then rotates around the intact phosphodiester bond on the opposing strand, thus removing DNA supercoils. Finally, in the religation step, the DNA 5'-OH attacks the covalent intermediate to expel the active-site tyrosine and restore the DNA phosphodiester backbone. This chain is DNA topoisomerase 1 (TOP1), found in Mycosarcoma maydis (Corn smut fungus).